The sequence spans 180 residues: Probable RNA 2'-phosphotransferase (180 aa).

It belongs to the KptA/TPT1 family.

In terms of biological role, removes the 2'-phosphate from RNA via an intermediate in which the phosphate is ADP-ribosylated by NAD followed by a presumed transesterification to release the RNA and generate ADP-ribose 1''-2''-cyclic phosphate (APPR&gt;P). May function as an ADP-ribosylase. In Thermococcus kodakarensis (strain ATCC BAA-918 / JCM 12380 / KOD1) (Pyrococcus kodakaraensis (strain KOD1)), this protein is Probable RNA 2'-phosphotransferase.